The following is a 1464-amino-acid chain: Collagen alpha-1(I) chain (1464 aa).

Positions M1 to G22 are cleaved as a signal peptide. Positions Q23–P161 are cleaved as a propeptide — N-terminal propeptide. Positions I38–P96 constitute a VWFC domain. The interval G98 to R1214 is disordered. Residues P138–P153 show a composition bias toward pro residues. The residue at position 162 (Q162) is a Pyrrolidone carboxylic acid. Positions Q162–P178 are nonhelical region (N-terminal). K170 bears the Allysine mark. Residue S171 is modified to Phosphoserine. The interval G179 to P1192 is triple-helical region. 11 positions are modified to 4-hydroxyproline: P190, P193, P196, P205, P208, P211, P226, P241, P247, P256, and P262. A compositionally biased stretch (low complexity) spans P198 to M217. A compositionally biased stretch (basic and acidic residues) spans N229–E243. Residue K265 is modified to 5-hydroxylysine; alternate. Residue K265 is glycosylated (O-linked (Gal...) hydroxylysine; alternate). S271 is subject to Phosphoserine. Positions D279–N295 are enriched in low complexity. 5 positions are modified to 4-hydroxyproline: P289, P292, P298, P307, and P313. Over residues P318 to A331 the composition is skewed to low complexity. Over residues P333–F345 the composition is skewed to pro residues. 4-hydroxyproline is present on residues P334, P343, P346, P373, P376, P388, P394, P403, P409, P412, and P427. The segment covering A379–S418 has biased composition (low complexity). A 5-hydroxylysine modification is found at K430. 4-hydroxyproline is present on residues P436, P439, P451, P460, P475, P481, P490, and P496. Residues K448–Q457 are compositionally biased toward low complexity. Residues G485–G494 are compositionally biased toward gly residues. Position 505 is a 5-hydroxylysine (K505). 28 positions are modified to 4-hydroxyproline: P514, P523, P529, P535, P544, P547, P556, P565, P571, P583, P592, P601, P604, P622, P640, P646, P652, P658, P664, P670, P682, P691, P703, P715, P718, P724, P730, and P739. Over residues K538–R564 the composition is skewed to low complexity. A compositionally biased stretch (low complexity) spans A573 to P592. Residues Q634–Q661 show a composition bias toward low complexity. A compositionally biased stretch (low complexity) spans P696 to P724. Residues R745–D747 carry the Cell attachment site motif. K751 is modified (5-hydroxylysine). 4-hydroxyproline is present on residues P757, P772, and P778. The segment covering S784–A798 has biased composition (low complexity). At S787 the chain carries Phosphoserine. P799, P805, P808, P817, P823, P841, P850, and P859 each carry 4-hydroxyproline. Low complexity predominate over residues A811–A838. Residues P840–P852 are compositionally biased toward pro residues. Over residues I853–V883 the composition is skewed to low complexity. K862 bears the 5-hydroxylysine mark. 2 positions are modified to 4-hydroxyproline: P871 and P877. Residue P885 is modified to 3-hydroxyproline. A 4-hydroxyproline mark is found at P886, P895, P898, P919, P928, P937, P946, P964, P973, P976, P982, P997, P1003, P1009, P1018, and P1024. The segment covering E912–E921 has biased composition (low complexity). Residues A931 to A955 are compositionally biased toward low complexity. Residues P996–A1006 are compositionally biased toward pro residues. K1033 is modified (5-hydroxylysine). The segment covering A1042–V1057 has biased composition (pro residues). Residues P1045, P1048, and P1051 each carry the 4-hydroxyproline modification. Over residues V1078 to P1092 the composition is skewed to low complexity. A Cell attachment site motif is present at residues R1093–D1095. The segment covering R1093–I1107 has biased composition (basic and acidic residues). K1096 carries the 5-hydroxylysine modification. K1108 carries the 5-hydroxylysine; alternate modification. O-linked (Gal...) hydroxylysine; alternate glycosylation is present at K1108. 4-hydroxyproline is present on residues P1120, P1123, P1126, P1144, and P1159. Over residues P1126–P1159 the composition is skewed to low complexity. P1164 bears the 3-hydroxyproline mark. P1165 is modified (4-hydroxyproline). The span at V1177 to P1192 shows a compositional bias: pro residues. Position 1179 is a 3-hydroxyproline (P1179). P1180 is subject to 4-hydroxyproline. P1182 is modified (3-hydroxyproline). P1183 is modified (4-hydroxyproline). P1185 carries the post-translational modification 3-hydroxyproline. 4-hydroxyproline occurs at positions 1186, 1189, and 1192. Positions S1193–A1218 are nonhelical region (C-terminal). Allysine is present on K1208. A propeptide spans D1219–L1464 (C-terminal propeptide). The 236-residue stretch at L1229–L1464 folds into the Fibrillar collagen NC1 domain. 3 cysteine pairs are disulfide-bonded: C1259–C1291, C1299–C1462, and C1370–C1415. The Ca(2+) site is built by D1277, N1279, Q1280, C1282, and D1285. An N-linked (GlcNAc...) asparagine glycan is attached at N1365.

Belongs to the fibrillar collagen family. Trimers of one alpha 2(I) and two alpha 1(I) chains. Interacts with MRC2. Interacts with TRAM2. Interacts with MFAP4 in a Ca (2+)-dependent manner. Post-translationally, contains mostly 4-hydroxyproline. Proline residues at the third position of the tripeptide repeating unit (G-X-Y) are hydroxylated in some or all of the chains. Contains 3-hydroxyproline at a few sites. This modification occurs on the first proline residue in the sequence motif Gly-Pro-Hyp, where Hyp is 4-hydroxyproline. In terms of processing, lysine residues at the third position of the tripeptide repeating unit (G-X-Y) are 5-hydroxylated in some or all of the chains. Post-translationally, O-glycosylated on hydroxylated lysine residues. The O-linked glycan consists of a Glc-Gal disaccharide. In terms of tissue distribution, forms the fibrils of tendon, ligaments and bones. In bones the fibrils are mineralized with calcium hydroxyapatite.

It is found in the secreted. It localises to the extracellular space. Its subcellular location is the extracellular matrix. In terms of biological role, type I collagen is a member of group I collagen (fibrillar forming collagen). The polypeptide is Collagen alpha-1(I) chain (COL1A1) (Homo sapiens (Human)).